The primary structure comprises 471 residues: Trigger factor (471 aa).

The PPIase FKBP-type domain occupies 169–264 (GDVAVVDFKG…LKEIKEKELP (96 aa)).

It belongs to the FKBP-type PPIase family. Tig subfamily.

It localises to the cytoplasm. It carries out the reaction [protein]-peptidylproline (omega=180) = [protein]-peptidylproline (omega=0). In terms of biological role, involved in protein export. Acts as a chaperone by maintaining the newly synthesized protein in an open conformation. Functions as a peptidyl-prolyl cis-trans isomerase. The polypeptide is Trigger factor (Nostoc sp. (strain PCC 7120 / SAG 25.82 / UTEX 2576)).